The sequence spans 137 residues: uncharacterized protein (137 aa).

A disordered region spans residues 116 to 137 (ARPPRGSGGTRTARNGARTASE). Residues 125–137 (TRTARNGARTASE) are compositionally biased toward polar residues.

This is an uncharacterized protein from Mycobacterium bovis (strain ATCC BAA-935 / AF2122/97).